A 184-amino-acid polypeptide reads, in one-letter code: ATP synthase subunit b (184 aa).

The helical transmembrane segment at 25–45 threads the bilayer; that stretch reads IFPSWPIMLATLVSFTILLVV.

The protein belongs to the ATPase B chain family. As to quaternary structure, F-type ATPases have 2 components, F(1) - the catalytic core - and F(0) - the membrane proton channel. F(1) has five subunits: alpha(3), beta(3), gamma(1), delta(1), epsilon(1). F(0) has three main subunits: a(1), b(2) and c(10-14). The alpha and beta chains form an alternating ring which encloses part of the gamma chain. F(1) is attached to F(0) by a central stalk formed by the gamma and epsilon chains, while a peripheral stalk is formed by the delta and b chains.

It localises to the cell membrane. Its function is as follows. F(1)F(0) ATP synthase produces ATP from ADP in the presence of a proton or sodium gradient. F-type ATPases consist of two structural domains, F(1) containing the extramembraneous catalytic core and F(0) containing the membrane proton channel, linked together by a central stalk and a peripheral stalk. During catalysis, ATP synthesis in the catalytic domain of F(1) is coupled via a rotary mechanism of the central stalk subunits to proton translocation. Component of the F(0) channel, it forms part of the peripheral stalk, linking F(1) to F(0). In Mycoplasma mobile (strain ATCC 43663 / 163K / NCTC 11711) (Mesomycoplasma mobile), this protein is ATP synthase subunit b.